Consider the following 102-residue polypeptide: MTIGLEHYLAVAAILFVTGIFGIFVNRKNVIVILMSIELMLLAVNINMVAFSTHLGDLVGQVFTMFVLTVAAAEAAIGLAILVVFFRNRGTIAVEDVNVMKG.

A run of 3 helical transmembrane segments spans residues Leu5 to Val25, Ile31 to Phe51, and Phe66 to Phe86.

Belongs to the complex I subunit 4L family. As to quaternary structure, NDH-1 is composed of 14 different subunits. Subunits NuoA, H, J, K, L, M, N constitute the membrane sector of the complex.

Its subcellular location is the cellular chromatophore membrane. The enzyme catalyses a quinone + NADH + 5 H(+)(in) = a quinol + NAD(+) + 4 H(+)(out). In terms of biological role, NDH-1 shuttles electrons from NADH, via FMN and iron-sulfur (Fe-S) centers, to quinones in the respiratory chain. The immediate electron acceptor for the enzyme in this species is believed to be ubiquinone. Couples the redox reaction to proton translocation (for every two electrons transferred, four hydrogen ions are translocated across the cytoplasmic membrane), and thus conserves the redox energy in a proton gradient. The chain is NADH-quinone oxidoreductase subunit K from Rhodobacter capsulatus (Rhodopseudomonas capsulata).